Consider the following 230-residue polypeptide: Flagellar L-ring protein (230 aa).

Residues 1–26 form the signal peptide; it reads MKQVRLLPSATVRAACAVAVAAFAAG. Residue Cys-27 is the site of N-palmitoyl cysteine attachment. Cys-27 carries the S-diacylglycerol cysteine lipid modification.

This sequence belongs to the FlgH family. The basal body constitutes a major portion of the flagellar organelle and consists of four rings (L,P,S, and M) mounted on a central rod.

It localises to the cell outer membrane. Its subcellular location is the bacterial flagellum basal body. In terms of biological role, assembles around the rod to form the L-ring and probably protects the motor/basal body from shearing forces during rotation. This chain is Flagellar L-ring protein, found in Burkholderia lata (strain ATCC 17760 / DSM 23089 / LMG 22485 / NCIMB 9086 / R18194 / 383).